Here is a 526-residue protein sequence, read N- to C-terminus: Glutamate--tRNA ligase, mitochondrial (526 aa).

A mitochondrion-targeting transit peptide spans 1-38; the sequence is MLSYTSCAKLICSRYIVSKISFYSLKRCNSTAVVRTRF. 37-39 contacts L-glutamate; that stretch reads RFA. Positions 42–50 match the 'HIGH' region motif; it reads PTGFLHLGS. Histidine 47 contributes to the ATP binding site. Residues glutamate 73, 222 to 226, and arginine 240 each bind L-glutamate; that span reads YHFAN. Residues glutamate 243 and 278–282 each bind ATP; that span reads KLSKR. Residues 278 to 282 carry the 'KMSKS' region motif; sequence KLSKR.

This sequence belongs to the class-I aminoacyl-tRNA synthetase family. Glutamate--tRNA ligase type 1 subfamily.

Its subcellular location is the mitochondrion. It catalyses the reaction tRNA(Glu) + L-glutamate + ATP = L-glutamyl-tRNA(Glu) + AMP + diphosphate. Functionally, catalyzes the attachment of glutamate to tRNA(Glu) in a two-step reaction: glutamate is first activated by ATP to form Glu-AMP and then transferred to the acceptor end of tRNA(Glu). The protein is Glutamate--tRNA ligase, mitochondrial (mse1) of Schizosaccharomyces pombe (strain 972 / ATCC 24843) (Fission yeast).